The sequence spans 685 residues: Glycine--tRNA ligase beta subunit (685 aa).

Belongs to the class-II aminoacyl-tRNA synthetase family. In terms of assembly, tetramer of two alpha and two beta subunits.

It localises to the cytoplasm. The catalysed reaction is tRNA(Gly) + glycine + ATP = glycyl-tRNA(Gly) + AMP + diphosphate. The chain is Glycine--tRNA ligase beta subunit from Leuconostoc mesenteroides subsp. mesenteroides (strain ATCC 8293 / DSM 20343 / BCRC 11652 / CCM 1803 / JCM 6124 / NCDO 523 / NBRC 100496 / NCIMB 8023 / NCTC 12954 / NRRL B-1118 / 37Y).